The primary structure comprises 541 residues: MVCLAAFSAQAAETKKVDVLLVGGGIMSSTLGVWLHELEPDWSMMMVERLDGVAQESSNGWNNAGTGHSALAELNYTPEKSNGKIDISKAVEINEGFQVTRQFWTYQVKTGVLKNPRSFINSTPHMSFVWGEDNVRYLKKRYEALQASPLFRGMQFSDDYDQISKWVPLMMEGRDRSQKVAATWMPVGTDVNFGEITRQFVGYLQSQPQFTLSLSSEVRDIKRNDDGTWRVSYVNLKSGDRQDVDTKFLFIGAGGGALRLLQASGIPEARDFAAFPVGGSFLVTENPEVVNRHLAKAYGKASVGSPPMSVPHLDTRVIDGKRIILFGPFATFSTKFLKNGSYMDLFGSTTSHNVMPMLHVGVDEFPLVQYLAGQLMLSDEDRFNALKEYFPLAKKEDWRLWQAGQRVQIIQRDEAKGGILKLGTQIVKSKDGTIAGLLGASPGASTAAPIMLGVLETVFKDKLATPAWQQKVRQMIPTYGIKLNDNPAKVYEEWVATAEALQLSPPPRIDLRVTPAAPAAKPAAGAAQQAKPAKATADIAL.

Residues 520–541 (AKPAAGAAQQAKPAKATADIAL) form a disordered region.

It belongs to the MQO family. Requires FAD as cofactor.

The enzyme catalyses (S)-malate + a quinone = a quinol + oxaloacetate. It functions in the pathway carbohydrate metabolism; tricarboxylic acid cycle; oxaloacetate from (S)-malate (quinone route): step 1/1. The sequence is that of Probable malate:quinone oxidoreductase from Ralstonia nicotianae (strain ATCC BAA-1114 / GMI1000) (Ralstonia solanacearum).